The following is a 179-amino-acid chain: ADP-ribosylation factor-like protein 5B (179 aa).

The N-myristoyl glycine moiety is linked to residue G2. GTP contacts are provided by residues 23-30 (GLDNAGKT), 66-70 (DIGGQ), 125-128 (NKQD), and A159.

Belongs to the small GTPase superfamily. Arf family.

Functionally, binds and exchanges GTP and GDP. The chain is ADP-ribosylation factor-like protein 5B (Arl5b) from Mus musculus (Mouse).